Here is a 201-residue protein sequence, read N- to C-terminus: Recombination protein RecR (201 aa).

Residues 57 to 72 (CADCRTFTEQEHCTIC) form a C4-type zinc finger. Residues 81-176 (GQICVVESPA…LASRIAHGVP (96 aa)) form the Toprim domain.

It belongs to the RecR family.

Functionally, may play a role in DNA repair. It seems to be involved in an RecBC-independent recombinational process of DNA repair. It may act with RecF and RecO. The sequence is that of Recombination protein RecR from Yersinia pestis bv. Antiqua (strain Antiqua).